The primary structure comprises 172 residues: Ribosome maturation factor RimM (172 aa).

Residues 95-168 (AEGEFYYHQI…RVDVEIMEGL (74 aa)) form the PRC barrel domain.

This sequence belongs to the RimM family. Binds ribosomal protein uS19.

Its subcellular location is the cytoplasm. In terms of biological role, an accessory protein needed during the final step in the assembly of 30S ribosomal subunit, possibly for assembly of the head region. Essential for efficient processing of 16S rRNA. May be needed both before and after RbfA during the maturation of 16S rRNA. It has affinity for free ribosomal 30S subunits but not for 70S ribosomes. This Streptococcus equi subsp. equi (strain 4047) protein is Ribosome maturation factor RimM.